The sequence spans 321 residues: Lipoyl synthase (321 aa).

Positions 68, 73, 79, 94, 98, 101, and 308 each coordinate [4Fe-4S] cluster. Residues 80–297 form the Radical SAM core domain; sequence FNHGTATFMI…KALADELGFT (218 aa).

It belongs to the radical SAM superfamily. Lipoyl synthase family. [4Fe-4S] cluster is required as a cofactor.

It localises to the cytoplasm. The catalysed reaction is [[Fe-S] cluster scaffold protein carrying a second [4Fe-4S](2+) cluster] + N(6)-octanoyl-L-lysyl-[protein] + 2 oxidized [2Fe-2S]-[ferredoxin] + 2 S-adenosyl-L-methionine + 4 H(+) = [[Fe-S] cluster scaffold protein] + N(6)-[(R)-dihydrolipoyl]-L-lysyl-[protein] + 4 Fe(3+) + 2 hydrogen sulfide + 2 5'-deoxyadenosine + 2 L-methionine + 2 reduced [2Fe-2S]-[ferredoxin]. The protein operates within protein modification; protein lipoylation via endogenous pathway; protein N(6)-(lipoyl)lysine from octanoyl-[acyl-carrier-protein]: step 2/2. Functionally, catalyzes the radical-mediated insertion of two sulfur atoms into the C-6 and C-8 positions of the octanoyl moiety bound to the lipoyl domains of lipoate-dependent enzymes, thereby converting the octanoylated domains into lipoylated derivatives. The polypeptide is Lipoyl synthase (Shewanella frigidimarina (strain NCIMB 400)).